Consider the following 136-residue polypeptide: Glycine-rich RNA-binding protein 4, mitochondrial (136 aa).

The transit peptide at methionine 1 to methionine 33 directs the protein to the mitochondrion. The RRM domain occupies serine 35 to glutamate 113. Phosphoserine is present on serine 43. The disordered stretch occupies residues glutamate 113 to tyrosine 136. Gly residues predominate over residues phenylalanine 122–tyrosine 136. The segment at glycine 123–glycine 135 is glycine-rich (GR) required for cell-to-cell movement.

It belongs to the GR-RBP family. As to quaternary structure, binds to small phloem-mobile single-stranded RNAs (ss-sRNA, e.g. small interfering RNA (siRNA) and microRNA (miRNA)) in the phloeme exudate, including viral-derived sRNA (vsiRNA). In terms of tissue distribution, abundantly expressed in young plants, root tips, and flowers, but weakly in mature leaves and stems, implying highly expression in actively proliferating organs.

It localises to the mitochondrion. The protein resides in the secreted. In terms of biological role, possibly has a role in RNA transcription or processing during stress. Binds sequence non-specifically to RNAs and DNAs. Mediates cell-to-cell trafficking of RNA interference (RNAi) signals (small RNAs (sRNA), e.g. small interfering RNA (siRNA) and microRNA (miRNA)) which regulate growth and development, as well as responses to environmental inputs, including pathogen attack; can compromise zucchini yellow mosaic virus (ZYMV) and tobacco rattle virus (TRV) infections at the early stage. The chain is Glycine-rich RNA-binding protein 4, mitochondrial from Arabidopsis thaliana (Mouse-ear cress).